The sequence spans 670 residues: uncharacterized protein (670 aa).

The tract at residues 53 to 83 is disordered; that stretch reads PTAKPSDFPGDAVTGTQPVPREPSSLPRTTP. Tandem repeats lie at residues 143 to 158, 171 to 186, 200 to 214, 215 to 233, 234 to 252, 253 to 268, 279 to 293, 294 to 309, 320 to 334, 335 to 349, 362 to 376, 377 to 391, 392 to 406, 407 to 421, 422 to 436, 437 to 452, 464 to 477, 478 to 493, 504 to 517, 518 to 531, 532 to 545, 546 to 559, 560 to 573, 574 to 587, 588 to 601, 602 to 615, and 616 to 629. The tract at residues 187-225 is disordered; it reads PAGANDTAVTTTSATPAGANDTAVTTTPATPAGANDTAN. Over residues 205–225 the composition is skewed to low complexity; that stretch reads ANDTAVTTTPATPAGANDTAN. The disordered stretch occupies residues 339–395; it reads GANDTANVTKPAGSTDTVVTTTPAMPTGATDTVVTTTPAMPTGATDTVVTTTPAMPT. Positions 342 to 362 are enriched in polar residues; that stretch reads DTANVTKPAGSTDTVVTTTPA. Low complexity predominate over residues 363 to 395; that stretch reads MPTGATDTVVTTTPAMPTGATDTVVTTTPAMPT. Low complexity-rich tracts occupy residues 471-482 and 490-503; these read GTVTTTTAKPTG and TKPTGATGTVTTTT. Residues 471–503 form a disordered region; it reads GTVTTTTAKPTGANDTANVTKPTGATGTVTTTT. Residues 525–634 show a composition bias toward low complexity; that stretch reads GTVTTTTAKP…VTTTTAKPAG (110 aa). The interval 525-670 is disordered; that stretch reads GTVTTTTAKP…GHKPKSGARR (146 aa). Over residues 638-654 the composition is skewed to basic residues; sequence GHGHGHGHGHGHGHGHG.

This is an uncharacterized protein from Ictalurid herpesvirus 1 (strain Auburn) (IcHV-1).